The chain runs to 218 residues: MQDLAAIAYLTLGIAIVGGYLLGSIPFGLIATRLGGAGDIRQIGSGNIGATNVLRSGRKDLAAITLLGDAGKGVVAVLLARYLTNGNPAIIALAGGSAFLGHLFPVWLKFKGGKGVATFYGVLLSAAWPVGVAAGATWLAMAFLFRISSLAALTAAVLAAPFALAFDQPYPFMGLCLFMAVLIFIRHRENIARLLKGEEPKIGKKKPAEEAPPAPDAP.

Helical transmembrane passes span 10–30, 60–80, 88–108, 125–145, and 165–185; these read LTLGIAIVGGYLLGSIPFGLI, DLAAITLLGDAGKGVVAVLLA, PAIIALAGGSAFLGHLFPVWL, SAAWPVGVAAGATWLAMAFLF, and AFDQPYPFMGLCLFMAVLIFI.

The protein belongs to the PlsY family. In terms of assembly, probably interacts with PlsX.

It localises to the cell inner membrane. The enzyme catalyses an acyl phosphate + sn-glycerol 3-phosphate = a 1-acyl-sn-glycero-3-phosphate + phosphate. Its pathway is lipid metabolism; phospholipid metabolism. Functionally, catalyzes the transfer of an acyl group from acyl-phosphate (acyl-PO(4)) to glycerol-3-phosphate (G3P) to form lysophosphatidic acid (LPA). This enzyme utilizes acyl-phosphate as fatty acyl donor, but not acyl-CoA or acyl-ACP. This Caulobacter vibrioides (strain ATCC 19089 / CIP 103742 / CB 15) (Caulobacter crescentus) protein is Glycerol-3-phosphate acyltransferase.